Consider the following 247-residue polypeptide: Osmotin-like protein NP24-I (247 aa).

The first 21 residues, 1-21 (MGYLTSSFVLFFLLCVTYTYA), serve as a signal peptide directing secretion. Intrachain disulfides connect C30–C225, C72–C82, C87–C93, C141–C213, C146–C196, C154–C164, C168–C177, and C178–C183.

It belongs to the thaumatin family. As to expression, highest levels of both isoforms found in the outer pericarp, with smaller amounts in the inner pericarp.

The protein localises to the cytoplasm. The protein resides in the vacuole. It catalyses the reaction Endohydrolysis of (1-&gt;3)- or (1-&gt;4)-linkages in beta-D-glucans when the glucose residue whose reducing group is involved in the linkage to be hydrolyzed is itself substituted at C-3.. Functionally, has antifungal activity against P.betae and F.dahliae. May be involved in disease resistance in tomatoes and/or have a possible role in fruit development and ripening. Binds to beta-glucans and exhibits beta-1,3-D-glucanase activity. This is Osmotin-like protein NP24-I from Solanum lycopersicum (Tomato).